The sequence spans 221 residues: Cyclin-U3-1 (221 aa).

It belongs to the cyclin family. Cyclin U/P subfamily. In terms of assembly, interacts with CDKA-1 and CDKB1-1. Expressed in roots, stems and flowers. Expressed in the shoot apex, leaf primordia and young leaves.

The chain is Cyclin-U3-1 (CYCU3-1) from Arabidopsis thaliana (Mouse-ear cress).